We begin with the raw amino-acid sequence, 921 residues long: uncharacterized protein (921 aa).

The tract at residues Met334–Phe628 is kinase-like. Residues Gly401–Gly494 are compositionally biased toward low complexity. Disordered stretches follow at residues Gly401–Asn499 and Asn664–Ser711.

This is an uncharacterized protein from Dictyostelium discoideum (Social amoeba).